The primary structure comprises 435 residues: Beta-arrestin arr-1 (435 aa).

The tract at residues 358–382 is disordered; sequence LTHSKPPESPERTDRGLPSIEATNG. A compositionally biased stretch (basic and acidic residues) spans 362–372; it reads KPPESPERTDR. Positions 390–394 match the Clathrin box motif; the sequence is LIQLH. Residues 404-414 carry the [DE]-X(1,2)-F-X-X-[FL]-X-X-X-R motif motif; the sequence is DLIFEDFARMR. Residues 416–435 form a disordered region; sequence HGNDSEDQPSPSANLPPSLL. Residues 424–435 show a composition bias toward low complexity; that stretch reads PSPSANLPPSLL.

It belongs to the arrestin family. In terms of assembly, component of a complex composed of arr-1, daf-18 and mpz-1. Within the complex, interacts (via C-terminus) with mpz-1 (via PDZ domain) and phosphatase daf-18. May interact (via C-terminus) with clathrin chc-1 and beta-2 adaptin (AP2) apb-1. As to expression, expressed in head neurons, nerve ring and ventral nerve cord (at protein level). Expressed in the nervous system including the nerve ring and the ventral and dorsal nerve cords. Highly expressed in amphid chemosensory neurons AWA, AWB, AWC, ADL and ASH, and in hermaphrodite specific neuron HSN. Also expressed in the intestine.

Its subcellular location is the perikaryon. It localises to the cell projection. It is found in the dendrite. Functionally, adapter protein required for olfactory adaptation and recovery to volatile odorants, probably by desensitization of G-protein coupled receptors (GPCR). May play a role in clathrin-mediated GPCR endocytosis. Acts as a positive regulator of insulin-like daf-2 signaling pathway probably by forming a complex with mpz-1 and phosphatase daf-18 likely resulting in daf-18 inhibition. Involved in egg-laying. The polypeptide is Beta-arrestin arr-1 (Caenorhabditis elegans).